Consider the following 425-residue polypeptide: MASGQFVNKLQEEVICPICLDILQKPVTIDCGHNFCLKCITQIGETSCGFFKCPLCKTSVRKNAIRFNSLLRNLVEKIQALQASEVQSKRKEATCPRHQEMFHYFCEDDGKFLCFVCRESKDHKSHNVSLIEEAAQNYQGQIQEQIQVLQQKEKETVQVKAQGVHRVDVFTDQVEHEKQRILTEFELLHQVLEEEKNFLLSRIYWLGHEGTEAGKHYVASTEPQLNDLKKLVDSLKTKQNMPPRQLLEDIKVVLCRSEEFQFLNPTPVPLELEKKLSEAKSRHDSITGSLKKFKDQLQADRKKDENRFFKSMNKNDMKSWGLLQKNNHKMNKTSEPGSSSAGGRTTSGPPNHHSSAPSHSLFRASSAGKVTFPVCLLASYDEISGQGASSQDTKTFDVALSEELHAALSEWLTAIRAWFCEVPSS.

Residues 16 to 57 form an RING-type zinc finger; the sequence is CPICLDILQKPVTIDCGHNFCLKCITQIGETSCGFFKCPLCK. A B box-type zinc finger spans residues 90–131; that stretch reads RKEATCPRHQEMFHYFCEDDGKFLCFVCRESKDHKSHNVSLI. Cysteine 95, histidine 98, cysteine 117, and histidine 123 together coordinate Zn(2+). Coiled coils occupy residues 126–162 and 270–307; these read HNVS…VKAQ and LELE…DENR. A disordered region spans residues 328–360; the sequence is HKMNKTSEPGSSSAGGRTTSGPPNHHSSAPSHS. Low complexity predominate over residues 336 to 360; sequence PGSSSAGGRTTSGPPNHHSSAPSHS.

It belongs to the TRIM/RBCC family. May form oligomers. Interacts with isoform p52shc of SHC1. Auto-ubiquitinated (in vitro). As to expression, up-regulated in gastric adenocarcinomas.

Its subcellular location is the cytoplasm. It is found in the mitochondrion. The enzyme catalyses S-ubiquitinyl-[E2 ubiquitin-conjugating enzyme]-L-cysteine + [acceptor protein]-L-lysine = [E2 ubiquitin-conjugating enzyme]-L-cysteine + N(6)-ubiquitinyl-[acceptor protein]-L-lysine.. Its pathway is protein modification; protein ubiquitination. In terms of biological role, E3 ubiquitin-protein ligase that acts as a regulator of antiviral immune response and inflammation by mediating ubiquitination of substrates. Acts as a regulator of innate immune defense against viruses by mediating 'Lys-63'-linked ubiquitination of MAVS, promoting MAVS polymerization and formation of three-stranded helical filaments on mitochondria. Acts as a negative regulator of the NLRP3 inflammasome by catalyzing 'Lys-48'-linked ubiquitination of NLRP3, leading to its degradation. Regulator of Src-induced anchorage independent cell growth. The sequence is that of E3 ubiquitin-protein ligase TRIM31 from Homo sapiens (Human).